A 134-amino-acid chain; its full sequence is Putative pre-16S rRNA nuclease (134 aa).

This sequence belongs to the YqgF nuclease family.

Its subcellular location is the cytoplasm. Could be a nuclease involved in processing of the 5'-end of pre-16S rRNA. In Helicobacter pylori (strain G27), this protein is Putative pre-16S rRNA nuclease.